We begin with the raw amino-acid sequence, 785 residues long: E3 UFM1-protein ligase 1 homolog (785 aa).

Positions 404–482 (NASFQDQDDD…AGGGGGNKKT (79 aa)) are disordered.

This sequence belongs to the UFL1 family.

E3 UFM1-protein ligase that mediates ufmylation of target proteins. The polypeptide is E3 UFM1-protein ligase 1 homolog (Drosophila persimilis (Fruit fly)).